The following is a 1386-amino-acid chain: X-linked retinitis pigmentosa GTPase regulator homolog (1386 aa).

Disordered stretches follow at residues 1 to 25, 37 to 56, and 730 to 760; these read MFFK…TSSE, AGAR…KARR, and MPQM…PEQH. Residues 9–25 show a composition bias toward low complexity; it reads SRKTSANSSSDTSTSSE. Positions 45-56 are enriched in basic residues; that stretch reads SVHRQSGKKARR. 4 RCC1 repeats span residues 737 to 787, 788 to 838, 839 to 891, and 893 to 943; these read SKRS…VLSS, SGQL…FICS, DGSL…VLTD, and GRVL…CITE. The interval 972–994 is disordered; it reads LKNTEDPSSPSPSTNGSTPRVNL. 2 RCC1 repeats span residues 1034 to 1085 and 1087 to 1139; these read EGTL…ASTD and GSVF…FVQK.

Functionally, could be a guanine-nucleotide releasing factor for glo-1. May play a role in gut granule biogenesis. Regulates axon termination in PLM and ALM neurons. The protein is X-linked retinitis pigmentosa GTPase regulator homolog (glo-4) of Caenorhabditis elegans.